A 476-amino-acid chain; its full sequence is Glycogen synthase (476 aa).

Lys15 serves as a coordination point for ADP-alpha-D-glucose.

This sequence belongs to the glycosyltransferase 1 family. Bacterial/plant glycogen synthase subfamily.

The catalysed reaction is [(1-&gt;4)-alpha-D-glucosyl](n) + ADP-alpha-D-glucose = [(1-&gt;4)-alpha-D-glucosyl](n+1) + ADP + H(+). It participates in glycan biosynthesis; glycogen biosynthesis. Functionally, synthesizes alpha-1,4-glucan chains using ADP-glucose. This chain is Glycogen synthase, found in Haemophilus influenzae (strain 86-028NP).